The sequence spans 431 residues: Histidinol dehydrogenase 1 (431 aa).

Residues Y127, Q188, and N211 each coordinate NAD(+). Positions 234, 256, and 259 each coordinate substrate. Zn(2+) is bound by residues Q256 and H259. Residues E324 and H325 each act as proton acceptor in the active site. Substrate-binding residues include H325, D358, E412, and H417. D358 serves as a coordination point for Zn(2+). Position 417 (H417) interacts with Zn(2+).

Belongs to the histidinol dehydrogenase family. Requires Zn(2+) as cofactor.

The catalysed reaction is L-histidinol + 2 NAD(+) + H2O = L-histidine + 2 NADH + 3 H(+). Its pathway is amino-acid biosynthesis; L-histidine biosynthesis; L-histidine from 5-phospho-alpha-D-ribose 1-diphosphate: step 9/9. Catalyzes the sequential NAD-dependent oxidations of L-histidinol to L-histidinaldehyde and then to L-histidine. The polypeptide is Histidinol dehydrogenase 1 (Trichormus variabilis (strain ATCC 29413 / PCC 7937) (Anabaena variabilis)).